Reading from the N-terminus, the 819-residue chain is Sulfate permease 2 (819 aa).

The N-linked (GlcNAc...) asparagine glycan is linked to asparagine 24. The next 10 helical transmembrane spans lie at 72 to 92, 104 to 124, 129 to 149, 172 to 192, 194 to 214, 273 to 293, 328 to 348, 365 to 385, 454 to 474, and 477 to 497; these read YNLT…FVVV, LAPE…WAFA, ITIG…ANVQ, LLFL…IVAI, AFMT…LMGI, FFVS…VSWL, ILSA…IEHI, SQEL…GGYP, FWLT…VSIF, and IENG…WRIA. Positions 551–708 constitute an STAS domain; that stretch reads ELQISTPWPG…ENHKGGVQEV (158 aa). N-linked (GlcNAc...) asparagine glycosylation occurs at asparagine 581. Residues 726-766 are disordered; the sequence is EAVPVGTSGSGSTDEKRPEGEGGATNGGMEKGSANGEDIST. The segment covering 746–755 has biased composition (gly residues); it reads EGGATNGGME.

The protein belongs to the SLC26A/SulP transporter (TC 2.A.53) family. Mainly found in mycelia.

It localises to the membrane. Uptake of sulfate into the cell. The protein is Sulfate permease 2 (cys-14) of Neurospora crassa (strain ATCC 24698 / 74-OR23-1A / CBS 708.71 / DSM 1257 / FGSC 987).